We begin with the raw amino-acid sequence, 176 residues long: NAD(P)H-quinone oxidoreductase subunit 6, chloroplastic (176 aa).

A run of 5 helical transmembrane segments spans residues 10–30 (FLLV…VLFT), 33–53 (IFSA…YILA), 63–83 (LLIY…FMSG), 105–125 (ISLF…GIIW), and 152–172 (FFLP…GAIA).

Belongs to the complex I subunit 6 family. In terms of assembly, NDH is composed of at least 16 different subunits, 5 of which are encoded in the nucleus.

The protein resides in the plastid. It is found in the chloroplast thylakoid membrane. It catalyses the reaction a plastoquinone + NADH + (n+1) H(+)(in) = a plastoquinol + NAD(+) + n H(+)(out). The enzyme catalyses a plastoquinone + NADPH + (n+1) H(+)(in) = a plastoquinol + NADP(+) + n H(+)(out). In terms of biological role, NDH shuttles electrons from NAD(P)H:plastoquinone, via FMN and iron-sulfur (Fe-S) centers, to quinones in the photosynthetic chain and possibly in a chloroplast respiratory chain. The immediate electron acceptor for the enzyme in this species is believed to be plastoquinone. Couples the redox reaction to proton translocation, and thus conserves the redox energy in a proton gradient. This Spinacia oleracea (Spinach) protein is NAD(P)H-quinone oxidoreductase subunit 6, chloroplastic (ndhG).